Reading from the N-terminus, the 319-residue chain is ATP-dependent 6-phosphofructokinase (319 aa).

Glycine 11 provides a ligand contact to ATP. 21-25 (RAVVR) contacts ADP. ATP is bound by residues 72–73 (RY) and 102–105 (GDGS). Aspartate 103 is a Mg(2+) binding site. 125–127 (TID) contacts substrate. The active-site Proton acceptor is aspartate 127. Arginine 154 is an ADP binding site. Substrate contacts are provided by residues arginine 162 and 169–171 (MGR). ADP is bound by residues 185 to 187 (GAE), arginine 211, and 213 to 215 (KKH). Substrate contacts are provided by residues glutamate 222, arginine 243, and 249-252 (HVQR).

Belongs to the phosphofructokinase type A (PFKA) family. ATP-dependent PFK group I subfamily. Prokaryotic clade 'B1' sub-subfamily. Homotetramer. It depends on Mg(2+) as a cofactor.

Its subcellular location is the cytoplasm. The catalysed reaction is beta-D-fructose 6-phosphate + ATP = beta-D-fructose 1,6-bisphosphate + ADP + H(+). It participates in carbohydrate degradation; glycolysis; D-glyceraldehyde 3-phosphate and glycerone phosphate from D-glucose: step 3/4. With respect to regulation, allosterically activated by ADP and other diphosphonucleosides, and allosterically inhibited by phosphoenolpyruvate. Its function is as follows. Catalyzes the phosphorylation of D-fructose 6-phosphate to fructose 1,6-bisphosphate by ATP, the first committing step of glycolysis. In Listeria innocua serovar 6a (strain ATCC BAA-680 / CLIP 11262), this protein is ATP-dependent 6-phosphofructokinase.